The chain runs to 312 residues: Lipid-translocating exporter-like protein RTA1 (312 aa).

The tract at residues 1–21 (MSPESKKITAHGSTSMPLSRT) is disordered. Over residues 11–21 (HGSTSMPLSRT) the composition is skewed to polar residues. A run of 6 helical transmembrane segments spans residues 29–49 (IPLTVGAIFSVIGFLQRFFLA), 61–81 (LSTMFILGAGPTYAGADYFIC), 103–123 (FITFDVLAEVCVWTGAGLLAG), 142–162 (AMITQAFLFTSFVAILASFHV), 183–203 (FMMVVHSLYASSIFIIIRSAY), and 223–243 (SLMLLNTAMFNVFHPGHILPI). 2 N-linked (GlcNAc...) asparagine glycosylation sites follow: Asn258 and Asn304.

Belongs to the lipid-translocating exporter (LTE) (TC 9.A.26.1) family.

It localises to the membrane. It participates in siderophore biosynthesis. Functionally, lipid-translocating exporter-like protein; part of the gene cluster that mediates the biosynthesis of hydroxamate-containing siderophores that play a critical role in virulence via intracellular iron acquisition during macrophage infection. In Ajellomyces capsulatus (Darling's disease fungus), this protein is Lipid-translocating exporter-like protein RTA1.